The primary structure comprises 424 residues: Glutamate-1-semialdehyde 2,1-aminomutase (424 aa).

N6-(pyridoxal phosphate)lysine is present on Lys260.

Belongs to the class-III pyridoxal-phosphate-dependent aminotransferase family. HemL subfamily. It depends on pyridoxal 5'-phosphate as a cofactor.

The protein localises to the cytoplasm. It carries out the reaction (S)-4-amino-5-oxopentanoate = 5-aminolevulinate. The protein operates within porphyrin-containing compound metabolism; protoporphyrin-IX biosynthesis; 5-aminolevulinate from L-glutamyl-tRNA(Glu): step 2/2. This chain is Glutamate-1-semialdehyde 2,1-aminomutase, found in Nitrosopumilus maritimus (strain SCM1).